The following is a 133-amino-acid chain: Small ribosomal subunit protein uS9 (133 aa).

Residues 102-113 (KVEGYLSRDPRA) show a composition bias toward basic and acidic residues. Residues 102–133 (KVEGYLSRDPRAKERRKYGLKKARKAPQFSKR) are disordered. Basic residues predominate over residues 114–133 (KERRKYGLKKARKAPQFSKR).

It belongs to the universal ribosomal protein uS9 family.

This Gloeobacter violaceus (strain ATCC 29082 / PCC 7421) protein is Small ribosomal subunit protein uS9.